The sequence spans 389 residues: Acetyl-CoA:oxalate CoA-transferase (389 aa).

The active site involves histidine 237.

As to quaternary structure, homodimer.

The enzyme catalyses oxalate + acetyl-CoA = oxalyl-CoA + acetate. In terms of biological role, involved in the catabolism of oxalate and in the adapatation to low pH. ACOCT serves to prime the oxalate-induced acid tolerance response (ATR) cycle by producing substrate for oxalyl-CoA decarboxylase (OXC) and formyl-coenzyme A transferase (FCOCT). Catalyzes the reversible conversion of acetyl-CoA and oxalate to oxalyl-CoA and acetate. It can also use formyl-CoA and oxalate to produce oxalyl-CoA and formate with significantly reduced specific activity. This chain is Acetyl-CoA:oxalate CoA-transferase (uctC), found in Acetobacter aceti.